The chain runs to 547 residues: Protein RBL (547 aa).

WD repeat units follow at residues 21–60 (LEHGVIKCVAFNHRGSLLAAGCADGGCVIWDFETRGIAKE), 65–104 (DCSAAITSVSWSKYGHRLLVSAADKSLTLWDVSTGEKIAR), 214–253 (SGAAPVKNIVFSRNGQYLLTNSHDRTIRIYENLLPAKNVL), 285–332 (EFQD…VKIL), and 334–373 (GPKEALIDLAWHPVHPIIVSVSLAGLVYIWAKDYTENWSA). The segment at 466–547 (SPASEEAGQN…GGDDDDDAYY (82 aa)) is disordered. The span at 499–511 (SEKAMELQAEKAK) shows a compositional bias: basic and acidic residues. Residues 530 to 547 (QETDDSINGGDDDDDAYY) are compositionally biased toward acidic residues.

As to quaternary structure, part of a complex composed of TRO, RBL and WDR5A. Interacts with TRO and WDR5A, but not with WDR5B. This complex is formed during both vegetative and reproductive development. As to expression, strongly expressed in root tips, shoot apices, vascular tissues, developing embryos and endosperms.

Its subcellular location is the nucleus. In terms of biological role, promotes the expression of FLC and FLC homologs to repress the floral transition. Promotes WRKY70 and LTP7 genes epigenetic methylation (e.g. H3K4me3) and subsequent expression. This Arabidopsis thaliana (Mouse-ear cress) protein is Protein RBL.